The sequence spans 89 residues: Small ribosomal subunit protein bS20 (89 aa).

Positions 1–20 (MANHKSAEKRARQTIKRTER) are disordered.

Belongs to the bacterial ribosomal protein bS20 family.

Functionally, binds directly to 16S ribosomal RNA. This is Small ribosomal subunit protein bS20 from Campylobacter curvus (strain 525.92).